A 160-amino-acid polypeptide reads, in one-letter code: M-phase phosphoprotein 6 (160 aa).

Glycyl lysine isopeptide (Lys-Gly) (interchain with G-Cter in SUMO2) cross-links involve residues K37 and K86. S110 carries the post-translational modification Phosphoserine. Positions 116 to 133 (RRYETLVGTIGKKFARKR) match the Nuclear localization signal motif. K127 participates in a covalent cross-link: Glycyl lysine isopeptide (Lys-Gly) (interchain with G-Cter in SUMO2). T147 carries the phosphothreonine modification. Residues K150 and K153 each participate in a glycyl lysine isopeptide (Lys-Gly) (interchain with G-Cter in SUMO2) cross-link.

It belongs to the MPP6 family. As to quaternary structure, associates with the RNA exosome complex, mediated by EXOSC3. Interacts with ARHGAP18. Interacts with exosome cofactors EXOSC10 and MTREX. Post-translationally, phosphorylated in M (mitotic) phase.

It is found in the nucleus. The protein resides in the nucleolus. The protein localises to the cytoplasm. Its function is as follows. RNA-binding protein that associates with the RNA exosome complex. Involved in the 3'-processing of the 7S pre-RNA to the mature 5.8S rRNA and play a role in recruiting the RNA exosome complex to pre-rRNA; this function may include C1D. The chain is M-phase phosphoprotein 6 from Homo sapiens (Human).